Reading from the N-terminus, the 278-residue chain is D-aminoacyl-tRNA deacylase (278 aa).

It belongs to the DtdA deacylase family. Monomer. Zn(2+) serves as cofactor.

It carries out the reaction a D-aminoacyl-tRNA + H2O = a tRNA + a D-alpha-amino acid + H(+). The catalysed reaction is glycyl-tRNA(Ala) + H2O = tRNA(Ala) + glycine + H(+). D-aminoacyl-tRNA deacylase with broad substrate specificity. By recycling D-aminoacyl-tRNA to D-amino acids and free tRNA molecules, this enzyme counteracts the toxicity associated with the formation of D-aminoacyl-tRNA entities in vivo. This is D-aminoacyl-tRNA deacylase from Archaeoglobus fulgidus (strain ATCC 49558 / DSM 4304 / JCM 9628 / NBRC 100126 / VC-16).